We begin with the raw amino-acid sequence, 172 residues long: Resuscitation-promoting factor RpfE (172 aa).

The first 28 residues, 1 to 28, serve as a signal peptide directing secretion; sequence MKNARTTLIAAAIAGTLVTTSPAGIANA. Residues 33–89 are disordered; the sequence is LDPNAAAGPDAVGFDPNLPPAPDAAPVDTPPAPEDAGFDPNLPPPLAPDFLSPPAEE. Residues 49 to 65 are compositionally biased toward pro residues; the sequence is NLPPAPDAAPVDTPPAP.

It belongs to the transglycosylase family. Rpf subfamily. As to quaternary structure, interacts with RipA.

Its function is as follows. Factor that stimulates resuscitation of dormant cells. Has peptidoglycan (PG) hydrolytic activity. Active in the pM concentration range. Has little to no effect on actively-growing cells. PG fragments could either directly activate the resuscitation pathway of dormant bacteria or serve as a substrate for endogenous Rpf, resulting in low molecular weight products with resuscitation activity. Stimulates growth of stationary phase M.bovis (a slow-growing Mycobacterium), reduces the lag phase of diluted fast-growers M.smegmatis and Micrococcus luteus. Sequential gene disruption indicates RpfB and RpfE are higher than RpfD and RpfC in functional hierarchy. In Mycobacterium tuberculosis (strain ATCC 25618 / H37Rv), this protein is Resuscitation-promoting factor RpfE (rpfE).